Consider the following 302-residue polypeptide: Merozoite surface protein 2 (302 aa).

An N-terminal signal peptide occupies residues 1-20 (MKVIKTLSIINFFIFVTFNI). N-linked (GlcNAc...) asparagine glycosylation is found at Asn-22 and Asn-36. Positions 44 to 228 (EESKPPTGAV…EQTESPELQS (185 aa)) are polymorphic region. The 1; partial repeat unit spans residues 55-60 (GSGAGA). Residues 55–113 (GSGAGAGSGAGAVAGSGAGAVAGSGAGAVAGSGAGAVAGSGAGAVAGSGAGAVAGSGAG) form an 8 X 8 AA tandem repeats of G-S-G-A-G-A-V-A region. 6 consecutive repeat copies span residues 61-68 (GSGAGAVA), 69-76 (GSGAGAVA), 77-84 (GSGAGAVA), 85-92 (GSGAGAVA), 93-100 (GSGAGAVA), and 101-108 (GSGAGAVA). One copy of the 8; partial repeat lies at 109-113 (GSGAG). Residues 114 to 263 (NGANPGADAE…DSQKECTDGN (150 aa)) are disordered. The segment covering 125-150 (SPSTPATTTTTTTTNDAEASTSTSSE) has biased composition (low complexity). Over residues 151 to 167 (NRNHNNAETNPKGKGEV) the composition is skewed to basic and acidic residues. Polar residues-rich tracts occupy residues 169-195 (KPNQ…NVPR) and 202-230 (KSPT…QSAP). Residue Asn-179 is glycosylated (N-linked (GlcNAc...) asparagine). Residue Asn-251 is glycosylated (N-linked (GlcNAc...) asparagine). Cys-259 and Cys-267 are oxidised to a cystine. 2 N-linked (GlcNAc...) asparagine glycosylation sites follow: Asn-275 and Asn-276. Asn-276 carries the GPI-anchor amidated asparagine lipid modification. The propeptide at 277–302 (SSNIASINKFVVLISATLVLSFAIFI) is removed in mature form.

It is found in the cell membrane. In terms of biological role, may play a role in the merozoite attachment to the erythrocyte. This Plasmodium falciparum (isolate tak 9) protein is Merozoite surface protein 2.